A 360-amino-acid chain; its full sequence is UDP-3-O-acylglucosamine N-acyltransferase (360 aa).

H253 (proton acceptor) is an active-site residue.

This sequence belongs to the transferase hexapeptide repeat family. LpxD subfamily. In terms of assembly, homotrimer.

The catalysed reaction is a UDP-3-O-[(3R)-3-hydroxyacyl]-alpha-D-glucosamine + a (3R)-hydroxyacyl-[ACP] = a UDP-2-N,3-O-bis[(3R)-3-hydroxyacyl]-alpha-D-glucosamine + holo-[ACP] + H(+). It functions in the pathway bacterial outer membrane biogenesis; LPS lipid A biosynthesis. Functionally, catalyzes the N-acylation of UDP-3-O-acylglucosamine using 3-hydroxyacyl-ACP as the acyl donor. Is involved in the biosynthesis of lipid A, a phosphorylated glycolipid that anchors the lipopolysaccharide to the outer membrane of the cell. In Burkholderia multivorans (strain ATCC 17616 / 249), this protein is UDP-3-O-acylglucosamine N-acyltransferase.